A 214-amino-acid polypeptide reads, in one-letter code: Octanoyltransferase (214 aa).

The BPL/LPL catalytic domain maps to 28–203 (GSGAETLLLL…RFEGFLDEFM (176 aa)). Residues 66 to 73 (RGGDVTYH), 133 to 135 (SIG), and 146 to 148 (GFA) each bind substrate. Catalysis depends on Cys164, which acts as the Acyl-thioester intermediate.

This sequence belongs to the LipB family.

The protein resides in the cytoplasm. The catalysed reaction is octanoyl-[ACP] + L-lysyl-[protein] = N(6)-octanoyl-L-lysyl-[protein] + holo-[ACP] + H(+). It functions in the pathway protein modification; protein lipoylation via endogenous pathway; protein N(6)-(lipoyl)lysine from octanoyl-[acyl-carrier-protein]: step 1/2. In terms of biological role, catalyzes the transfer of endogenously produced octanoic acid from octanoyl-acyl-carrier-protein onto the lipoyl domains of lipoate-dependent enzymes. Lipoyl-ACP can also act as a substrate although octanoyl-ACP is likely to be the physiological substrate. This Geotalea uraniireducens (strain Rf4) (Geobacter uraniireducens) protein is Octanoyltransferase.